Reading from the N-terminus, the 302-residue chain is Putative gluconeogenesis factor (302 aa).

Belongs to the gluconeogenesis factor family.

Its subcellular location is the cytoplasm. Required for morphogenesis under gluconeogenic growth conditions. This chain is Putative gluconeogenesis factor (ybhK), found in Escherichia coli O157:H7.